Consider the following 794-residue polypeptide: E3 ubiquitin-protein ligase wwp-1 (794 aa).

Over residues Met-1–Ser-16 the composition is skewed to low complexity. Disordered stretches follow at residues Met-1–Lys-31 and Arg-155–Thr-198. Residues Gln-10–Asn-124 enclose the C2 domain. The span at Asn-17 to Ala-27 shows a compositional bias: polar residues. The segment covering Ala-161 to Pro-186 has biased composition (low complexity). WW domains follow at residues Glu-219 to Thr-252, Gln-253 to Ala-286, Gly-324 to Thr-358, and Gln-366 to Thr-399. The 335-residue stretch at Asn-460 to Glu-794 folds into the HECT domain. Residue Cys-762 is the Glycyl thioester intermediate of the active site.

In terms of assembly, interacts (via WW domains) with Kruppel-like factor klf-1. Interacts with ubiquitin-conjugating enzyme E2 ubc-18. As to expression, expressed in neurons localized in the head and tail of adults.

It carries out the reaction S-ubiquitinyl-[E2 ubiquitin-conjugating enzyme]-L-cysteine + [acceptor protein]-L-lysine = [E2 ubiquitin-conjugating enzyme]-L-cysteine + N(6)-ubiquitinyl-[acceptor protein]-L-lysine.. Its pathway is protein modification; protein ubiquitination. Functionally, E3 ubiquitin-protein ligase which accepts ubiquitin from an E2 ubiquitin-conjugating enzyme in the form of a thioester and then directly transfers the ubiquitin to targeted substrates. Ubiquitinates klf-1. Required for diet restriction-mediated lifespan extension, acting in concert with Kruppel-like factor klf-1 in the intestine to perhaps modulate genes involved in lipid metabolism. Probably acting downstream of the Insulin/IGF-1-like signaling (IIS) mediated pathway, plays a role in the immune response to infection by the Gram-negative bacterium P.aeruginosa, at least partly in response to bacterial pore-forming toxins. This chain is E3 ubiquitin-protein ligase wwp-1, found in Caenorhabditis elegans.